Reading from the N-terminus, the 287-residue chain is MSGAKEVRTKIKSVQNTQKITKAMEMVAASKMRRAQERMEATRPYAQKMRQVIGHLAGANPDYRHPFLEEREKVERVGLVVISTDRGLCGGLNVNLFKSVLQQMREWDKQGVGVDFCTFGAKAAAFFGRLGASTLADTRGLGDTPHLEDMIGPIKVMLDAYTEGKIDRLYLVHNDFVNTMSQEAATRRLLPVEPVDEEEMLENWDYIYEPSASELLDDVLMRYIESQVYQGVVENVACEMAARMVAMKSATDNAGEIIDNLQLVYNKARQAAITQELSEIVAGANAV.

It belongs to the ATPase gamma chain family. F-type ATPases have 2 components, CF(1) - the catalytic core - and CF(0) - the membrane proton channel. CF(1) has five subunits: alpha(3), beta(3), gamma(1), delta(1), epsilon(1). CF(0) has three main subunits: a, b and c.

The protein resides in the cell inner membrane. In terms of biological role, produces ATP from ADP in the presence of a proton gradient across the membrane. The gamma chain is believed to be important in regulating ATPase activity and the flow of protons through the CF(0) complex. The chain is ATP synthase gamma chain from Alkalilimnicola ehrlichii (strain ATCC BAA-1101 / DSM 17681 / MLHE-1).